Reading from the N-terminus, the 158-residue chain is Superoxide dismutase [Cu-Zn] (158 aa).

Residues H46, H48, and H63 each contribute to the Cu cation site. A disulfide bridge connects residues C57 and C149. H63, H71, H80, and D83 together coordinate Zn(2+). H120 serves as a coordination point for Cu cation.

The protein belongs to the Cu-Zn superoxide dismutase family. Homodimer. Cu cation serves as cofactor. Requires Zn(2+) as cofactor.

The protein resides in the cytoplasm. The enzyme catalyses 2 superoxide + 2 H(+) = H2O2 + O2. In terms of biological role, destroys radicals which are normally produced within the cells and which are toxic to biological systems. This is Superoxide dismutase [Cu-Zn] (SODC) from Brugia pahangi (Filarial nematode worm).